Reading from the N-terminus, the 135-residue chain is Large ribosomal subunit protein bL21 (135 aa).

A disordered region spans residues 114–135 (EAEKETPVLDETPAEEVETAAE). The span at 125 to 135 (TPAEEVETAAE) shows a compositional bias: acidic residues.

It belongs to the bacterial ribosomal protein bL21 family. Part of the 50S ribosomal subunit. Contacts protein L20.

Functionally, this protein binds to 23S rRNA in the presence of protein L20. The protein is Large ribosomal subunit protein bL21 of Nostoc punctiforme (strain ATCC 29133 / PCC 73102).